A 247-amino-acid chain; its full sequence is 14-3-3 protein gamma (247 aa).

The residue at position 1 (methionine 1) is an N-acetylmethionine. At valine 2 the chain carries N-acetylvaline; in 14-3-3 protein gamma, N-terminally processed. The interaction with SPATA18/MIEAP stretch occupies residues 2–247 (VDREQLVQKA…QDDDGGEGNN (246 aa)). Serine 71 is subject to Phosphoserine. Tyrosine 133 is subject to Phosphotyrosine. Threonine 145 is modified (phosphothreonine). Serine 215 is subject to Phosphoserine. Threonine 234 is subject to Phosphothreonine. Position 235 is a phosphoserine (serine 235).

This sequence belongs to the 14-3-3 family. In terms of assembly, homodimer. Part of a complex that contains DSG3, PKP1, YAP1 and YWHAG; the complex is required for localization of DSG3 and YAP1 to the cell membrane in keratinocytes. Interacts with SAMSN1. Interacts with RAF1, SSH1 and CRTC2/TORC2. Interacts with ABL1 (phosphorylated form); the interaction retains it in the cytoplasm. Interacts with GAB2. Interacts with MDM4 (phosphorylated); negatively regulates MDM4 activity toward TP53. Interacts with PKA-phosphorylated AANAT and SIRT2. Interacts with the 'Thr-369' phosphorylated form of DAPK2. Interacts with PI4KB, TBC1D22A and TBC1D22B. Interacts with SLITRK1. Interacts with LRRK2; this interaction is dependent on LRRK2 phosphorylation. Interacts with MARK2 and MARK3. Interacts with MEFV. Interacts with ENDOG, TSC2 and PIK3C3; interaction with ENDOG weakens its interaction with TSC2 and PIK3C3. Interacts with (phosphorylated) WDR24. Interacts with BEST1; this interaction promotes L-glutamate channel activity leading to the positive regulation of NMDA glutamate receptor activity through the L-glutamate secretion. Interacts with PKP1 (when phosphorylated); the interaction results in translocation of PKP1 to the cytoplasm and loss of intercellular adhesion in keratinocytes. Interacts with SPATA18/MIEAP; a protein that also plays a role in MALM. Post-translationally, phosphorylated by various PKC isozymes.

It localises to the cytoplasm. The protein resides in the cytosol. It is found in the mitochondrion matrix. In terms of biological role, adapter protein implicated in the regulation of a large spectrum of both general and specialized signaling pathways. Binds to a large number of partners, usually by recognition of a phosphoserine or phosphothreonine motif. Binding generally results in the modulation of the activity of the binding partner. Promotes inactivation of WDR24 component of the GATOR2 complex by binding to phosphorylated WDR24. Participates in the positive regulation of NMDA glutamate receptor activity by promoting the L-glutamate secretion through interaction with BEST1. Reduces keratinocyte intercellular adhesion, via interacting with PKP1 and sequestering it in the cytoplasm, thereby reducing its incorporation into desmosomes. Plays a role in mitochondrial protein catabolic process (also named MALM) that promotes the degradation of damaged proteins inside mitochondria. This is 14-3-3 protein gamma from Bos taurus (Bovine).